The following is a 437-amino-acid chain: Rhoptry apical surface protein 2 (437 aa).

Residues 45 to 179 (GCLGSLFFYL…PRINLSLHKL (135 aa)) form the C2 domain. The 109-residue stretch at 230–338 (EGPLERLNAN…FIEKLRAYRE (109 aa)) folds into the PH domain. Residues 341-437 (STRVPSQKGA…SVVGDEEPQT (97 aa)) form a disordered region. Over residues 375–384 (RKSGGKKSRR) the composition is skewed to basic residues.

As to quaternary structure, interacts with RASP1. Interacts with RASP3.

The protein resides in the cytoplasmic vesicle. It localises to the secretory vesicle. The protein localises to the rhoptry membrane. In terms of biological role, essential for tachyzoite invasion of host cells by controlling rhoptry secretion. Binds to phosphatidic acid (PA) and phosphatidylinositol 4,5-bisphosphate (PIP2) lipids and thus, likely contributes to the assembly of the machinery that docks or primes the rhoptry to the parasite cell membrane prior to the fusion with the host cell membrane. In Toxoplasma gondii (strain ATCC 50853 / GT1), this protein is Rhoptry apical surface protein 2.